The chain runs to 409 residues: uncharacterized protein (409 aa).

Histidine 46 provides a ligand contact to Zn(2+). Glutamate 49 (proton acceptor) is an active-site residue. Zn(2+) is bound by residues histidine 50 and glutamate 126.

This sequence belongs to the peptidase M16 family. Zn(2+) serves as cofactor.

This is an uncharacterized protein from Bacillus subtilis (strain 168).